A 110-amino-acid chain; its full sequence is Insulin growth factor-like family member 1 (110 aa).

An N-terminal signal peptide occupies residues 1–24 (MAPRGCIVAVFAIFCISRLLCSHG). Residue asparagine 71 is glycosylated (N-linked (GlcNAc...) asparagine).

It belongs to the IGFL family. In terms of assembly, homodimer; disulfide-linked. As to expression, detected in ovary and spinal cord.

Its subcellular location is the secreted. Functionally, probable ligand of the IGFLR1 cell membrane receptor. This Homo sapiens (Human) protein is Insulin growth factor-like family member 1 (IGFL1).